A 261-amino-acid chain; its full sequence is Small ribosomal subunit protein mS23 (261 aa).

The interval 233 to 261 (RASSPSASWTNETEEEQKPIDQDVEEIQL) is disordered.

It belongs to the mitochondrion-specific ribosomal protein mS23 family. As to quaternary structure, component of the mitochondrial small ribosomal subunit.

The protein localises to the mitochondrion. The chain is Small ribosomal subunit protein mS23 (RSM25) from Kluyveromyces lactis (strain ATCC 8585 / CBS 2359 / DSM 70799 / NBRC 1267 / NRRL Y-1140 / WM37) (Yeast).